The following is a 1463-amino-acid chain: MAKNKKQNGKAKTPPVVAAAAGEQKETIGNGHAEQNGLNGHASSEESDPAAAGPNESADDKSAGVAGGGETEQQQQQQEDDVMRLMQETGFTVQVLSPGVEPLSIQVSSMELVQEIHQLLMDREDTCHRTCFSLQLDGRTLDNFAELKNIDGLQEGSVIRVVEEPYTMREARIHVRHVRDLLKSLDPADAYNGVDCSSLTFLHTITMGDIMEKKKTRQESVDCTPPDFIMPGARERPLLPLQPGTGKKGTPQPLKVLTTSAWNPPPGPRKLHGDLMYLYVVTMEDKRLHISACSRGFYVNQSTDDAFNPQPANPSYLSHSLIDLLSQISATFRRCFAQMQKKRTQRHPFERVATPYQVYTWTAPALEHTIDAIRAEDTFSSKLGYEEHIPGQTRDWNEELQTTRELPRATLPERLLRERAIFKVHSDFVTAATRGAMAVIDGNVMPINPGEDAKTQMFIWNNIFFSLGFDVRDHYKELGGDAAAFVAPRNDLHGVRVYSAVDVEGLYTLGTVVIDYRGYRVTAQSIIPGILEREQDQSVVYGSIDFGKTVLSHPKYLELLNAAGKHLKILPHSVYNDKEEAIELCSSVECKGIIGNDGRHYILDLLRTFPPDVNFLALPAEEEAVGKESRAMGFPIEHRHKLCCLRQELLEAFVENRYLMFMKHAAVQLQQCVKMKQEQKAAAAQKTEEGGKQAAIEAAAPAEGDKTPAKDAKDGKEAGKDANDGKEEGSTTKEAAAAAAAARSVPKPDSEDAKKLVESLISSDQKNESMEVVKRACEAVGSLKEYEFNIRFNPDVYSPGIRHVDEEPNAAGSLRRQKQLVKDAAEFLVKHQIPSFVHECLDHTSAPMDGVTLTELLHNRGINVRYLGKVVDQLAKIKQLEYLHTIAVSELIVRAAKHLFTAYLQQTDVMSMAAAISHFLNCFLTVSTGGYQPVANGTGADGDGQLADEFGPKAGGKKQNKQSKRGGGGGGGKGAAGGGRKATFSVPSSDNCEWTALTSKTLWAQIRQELKAYWDFELTVEQPAKEGKESKAAVIDSIEPLIGAFKLQKISLLRSFCLKTGVQILLQEYAFEQRNRPAFTDADIVNVFPVVKHINPRASDAYNFYTTGQTKIQQGYLQDGYGLISEALNLLNNVYGAMHPENAQCLRMLARLSYIMGDPQEALAIQQRAVLMSERVNGVDHPYTISEYGHLALYCFANSQITTALKLLYRARYLATIVCGENHPDIALMDSNISLILHAVGEYELSLRFLEHALALNIRYYGEKSLKVAVSYHLVARTQSCMGDFRSALVNEKETYAIYKQQLGENHEKTQESSECLRHLTQQAVVLQKKMNYANGKLLSTGLPPIHIQPPSMGSVLDMLNAINGIIFVQISSKEIANFKNEIEKRQKEAGAQSQQPGGGPVQANQEEVDQMLMETMQKTAAGIPFEEQDGEKKDGAAEAASHTAGGAAANTAAPAVSPRRKS.

Positions 1–79 are disordered; it reads MAKNKKQNGK…ETEQQQQQQE (79 aa). Residues 10–22 are compositionally biased toward low complexity; the sequence is KAKTPPVVAAAAG. In terms of domain architecture, Clu spans 374–616; sequence RAEDTFSSKL…RTFPPDVNFL (243 aa). Disordered stretches follow at residues 684–753, 942–988, and 1387–1463; these read AQKT…SEDA, GDGQ…SVPS, and QKEA…RRKS. Low complexity predominate over residues 692 to 702; it reads KQAAIEAAAPA. Residues 703–731 are compositionally biased toward basic and acidic residues; it reads EGDKTPAKDAKDGKEAGKDANDGKEEGST. A compositionally biased stretch (basic residues) spans 955–964; sequence GGKKQNKQSK. Positions 965–980 are enriched in gly residues; sequence RGGGGGGGKGAAGGGR. The span at 1438 to 1456 shows a compositional bias: low complexity; that stretch reads AEAASHTAGGAAANTAAPA.

Belongs to the CLU family.

The protein localises to the cytoplasm. Its function is as follows. mRNA-binding protein involved in proper cytoplasmic distribution of mitochondria. This is Clustered mitochondria protein homolog from Anopheles gambiae (African malaria mosquito).